The following is a 208-amino-acid chain: Thiamine-phosphate synthase (208 aa).

Residues 37 to 39 (QVR) and Asn-70 contribute to the 4-amino-2-methyl-5-(diphosphooxymethyl)pyrimidine site. Residues Asp-71 and Asp-90 each coordinate Mg(2+). Thr-109 is a binding site for 4-amino-2-methyl-5-(diphosphooxymethyl)pyrimidine. 135-137 (TTS) contributes to the 2-[(2R,5Z)-2-carboxy-4-methylthiazol-5(2H)-ylidene]ethyl phosphate binding site. 4-amino-2-methyl-5-(diphosphooxymethyl)pyrimidine is bound at residue Lys-138. A 2-[(2R,5Z)-2-carboxy-4-methylthiazol-5(2H)-ylidene]ethyl phosphate-binding site is contributed by Gly-166.

It belongs to the thiamine-phosphate synthase family. Mg(2+) serves as cofactor.

It carries out the reaction 2-[(2R,5Z)-2-carboxy-4-methylthiazol-5(2H)-ylidene]ethyl phosphate + 4-amino-2-methyl-5-(diphosphooxymethyl)pyrimidine + 2 H(+) = thiamine phosphate + CO2 + diphosphate. The catalysed reaction is 2-(2-carboxy-4-methylthiazol-5-yl)ethyl phosphate + 4-amino-2-methyl-5-(diphosphooxymethyl)pyrimidine + 2 H(+) = thiamine phosphate + CO2 + diphosphate. The enzyme catalyses 4-methyl-5-(2-phosphooxyethyl)-thiazole + 4-amino-2-methyl-5-(diphosphooxymethyl)pyrimidine + H(+) = thiamine phosphate + diphosphate. The protein operates within cofactor biosynthesis; thiamine diphosphate biosynthesis; thiamine phosphate from 4-amino-2-methyl-5-diphosphomethylpyrimidine and 4-methyl-5-(2-phosphoethyl)-thiazole: step 1/1. Condenses 4-methyl-5-(beta-hydroxyethyl)thiazole monophosphate (THZ-P) and 2-methyl-4-amino-5-hydroxymethyl pyrimidine pyrophosphate (HMP-PP) to form thiamine monophosphate (TMP). This is Thiamine-phosphate synthase from Salinispora arenicola (strain CNS-205).